Here is a 371-residue protein sequence, read N- to C-terminus: DNA replication and repair protein RecF (371 aa).

30–37 is a binding site for ATP; the sequence is GENAQGKT.

The protein belongs to the RecF family.

It localises to the cytoplasm. Its function is as follows. The RecF protein is involved in DNA metabolism; it is required for DNA replication and normal SOS inducibility. RecF binds preferentially to single-stranded, linear DNA. It also seems to bind ATP. The chain is DNA replication and repair protein RecF from Staphylococcus epidermidis (strain ATCC 35984 / DSM 28319 / BCRC 17069 / CCUG 31568 / BM 3577 / RP62A).